We begin with the raw amino-acid sequence, 124 residues long: Large ribosomal subunit protein eL33 (124 aa).

Alanine 2 bears the N-acetylalanine mark.

This sequence belongs to the eukaryotic ribosomal protein eL33 family.

This chain is Large ribosomal subunit protein eL33, found in Caenorhabditis elegans.